The sequence spans 374 residues: Histidinol-phosphate aminotransferase (374 aa).

K215 carries the post-translational modification N6-(pyridoxal phosphate)lysine.

Belongs to the class-II pyridoxal-phosphate-dependent aminotransferase family. Histidinol-phosphate aminotransferase subfamily. Homodimer. Pyridoxal 5'-phosphate is required as a cofactor.

The enzyme catalyses L-histidinol phosphate + 2-oxoglutarate = 3-(imidazol-4-yl)-2-oxopropyl phosphate + L-glutamate. The protein operates within amino-acid biosynthesis; L-histidine biosynthesis; L-histidine from 5-phospho-alpha-D-ribose 1-diphosphate: step 7/9. The sequence is that of Histidinol-phosphate aminotransferase from Yersinia enterocolitica serotype O:8 / biotype 1B (strain NCTC 13174 / 8081).